The chain runs to 393 residues: tRNA-specific 2-thiouridylase MnmA (393 aa).

Residues 19-26 (AMSGGVDS) and Leu-45 each bind ATP. Catalysis depends on Cys-113, which acts as the Nucleophile. Cysteines 113 and 210 form a disulfide. An ATP-binding site is contributed by Gly-137. The interval 160-162 (RDQ) is interaction with tRNA. Cys-210 serves as the catalytic Cysteine persulfide intermediate.

The protein belongs to the MnmA/TRMU family.

It localises to the cytoplasm. It catalyses the reaction S-sulfanyl-L-cysteinyl-[protein] + uridine(34) in tRNA + AH2 + ATP = 2-thiouridine(34) in tRNA + L-cysteinyl-[protein] + A + AMP + diphosphate + H(+). Functionally, catalyzes the 2-thiolation of uridine at the wobble position (U34) of tRNA, leading to the formation of s(2)U34. The polypeptide is tRNA-specific 2-thiouridylase MnmA (Afipia carboxidovorans (strain ATCC 49405 / DSM 1227 / KCTC 32145 / OM5) (Oligotropha carboxidovorans)).